The following is a 451-amino-acid chain: Chromosomal replication initiator protein DnaA (451 aa).

The segment at 1–72 is domain I, interacts with DnaA modulators; sequence MQSIEDIWQE…ANILQEITGR (72 aa). The segment at 72–108 is domain II; that stretch reads RLFDVRFIDGEQEENFEYTVIKPNPALDEDGIEIGKH. The domain III, AAA+ region stretch occupies residues 109-325; the sequence is MLNPRYVFDT…GALIRVVAYS (217 aa). Residues G153, G155, K156, and T157 each contribute to the ATP site. The domain IV, binds dsDNA stretch occupies residues 326 to 451; sequence SLVNKDITAG…KNLRKSQNMF (126 aa).

The protein belongs to the DnaA family. In terms of assembly, oligomerizes as a right-handed, spiral filament on DNA at oriC.

The protein resides in the cytoplasm. Plays an essential role in the initiation and regulation of chromosomal replication. ATP-DnaA binds to the origin of replication (oriC) to initiate formation of the DNA replication initiation complex once per cell cycle. Binds the DnaA box (a 9 base pair repeat at the origin) and separates the double-stranded (ds)DNA. Forms a right-handed helical filament on oriC DNA; dsDNA binds to the exterior of the filament while single-stranded (ss)DNA is stabiized in the filament's interior. The ATP-DnaA-oriC complex binds and stabilizes one strand of the AT-rich DNA unwinding element (DUE), permitting loading of DNA polymerase. After initiation quickly degrades to an ADP-DnaA complex that is not apt for DNA replication. Binds acidic phospholipids. This Listeria welshimeri serovar 6b (strain ATCC 35897 / DSM 20650 / CCUG 15529 / CIP 8149 / NCTC 11857 / SLCC 5334 / V8) protein is Chromosomal replication initiator protein DnaA.